The following is a 339-amino-acid chain: Homeobox protein DBX2 (339 aa).

Residues 186 to 245 constitute a DNA-binding region (homeobox); it reads GILRRAVFSEDQRKALEKMFQKQKYISKTDRKKLAINLGLKESQVKIWFQNRRMKWRNSK. Residues 282–318 form a disordered region; that stretch reads VPQQHSSPRWRENSPEPSERLIQESSGAPPPEANSLQ. Residues 290 to 303 show a composition bias toward basic and acidic residues; that stretch reads RWRENSPEPSERLI.

This sequence belongs to the H2.0 homeobox family.

It is found in the nucleus. This is Homeobox protein DBX2 (DBX2) from Homo sapiens (Human).